The following is a 251-amino-acid chain: Malonyl-[acyl-carrier protein] O-methyltransferase (251 aa).

The protein belongs to the methyltransferase superfamily.

The enzyme catalyses malonyl-[ACP] + S-adenosyl-L-methionine = malonyl-[ACP] methyl ester + S-adenosyl-L-homocysteine. The protein operates within cofactor biosynthesis; biotin biosynthesis. Functionally, converts the free carboxyl group of a malonyl-thioester to its methyl ester by transfer of a methyl group from S-adenosyl-L-methionine (SAM). It allows to synthesize pimeloyl-ACP via the fatty acid synthetic pathway. The polypeptide is Malonyl-[acyl-carrier protein] O-methyltransferase (Enterobacter lignolyticus (strain SCF1)).